Here is a 452-residue protein sequence, read N- to C-terminus: Exodeoxyribonuclease 7 large subunit (452 aa).

Belongs to the XseA family. As to quaternary structure, heterooligomer composed of large and small subunits.

It is found in the cytoplasm. It catalyses the reaction Exonucleolytic cleavage in either 5'- to 3'- or 3'- to 5'-direction to yield nucleoside 5'-phosphates.. Functionally, bidirectionally degrades single-stranded DNA into large acid-insoluble oligonucleotides, which are then degraded further into small acid-soluble oligonucleotides. The sequence is that of Exodeoxyribonuclease 7 large subunit from Bacillus cereus (strain 03BB102).